Consider the following 73-residue polypeptide: Large ribosomal subunit protein bL31 (73 aa).

Residues Cys16, Cys18, Cys38, and Cys41 each contribute to the Zn(2+) site.

Belongs to the bacterial ribosomal protein bL31 family. Type A subfamily. Part of the 50S ribosomal subunit. The cofactor is Zn(2+).

Functionally, binds the 23S rRNA. This Vibrio parahaemolyticus serotype O3:K6 (strain RIMD 2210633) protein is Large ribosomal subunit protein bL31.